The chain runs to 94 residues: Integration host factor subunit beta (94 aa).

Belongs to the bacterial histone-like protein family. Heterodimer of an alpha and a beta chain.

In terms of biological role, this protein is one of the two subunits of integration host factor, a specific DNA-binding protein that functions in genetic recombination as well as in transcriptional and translational control. The sequence is that of Integration host factor subunit beta from Sodalis glossinidius (strain morsitans).